The following is a 250-amino-acid chain: Cell division protein ZapD (250 aa).

Belongs to the ZapD family. Interacts with FtsZ.

The protein resides in the cytoplasm. Its function is as follows. Cell division factor that enhances FtsZ-ring assembly. Directly interacts with FtsZ and promotes bundling of FtsZ protofilaments, with a reduction in FtsZ GTPase activity. In Photorhabdus laumondii subsp. laumondii (strain DSM 15139 / CIP 105565 / TT01) (Photorhabdus luminescens subsp. laumondii), this protein is Cell division protein ZapD.